Here is a 1024-residue protein sequence, read N- to C-terminus: Error-prone DNA polymerase (1024 aa).

The protein belongs to the DNA polymerase type-C family. DnaE2 subfamily.

The protein localises to the cytoplasm. The enzyme catalyses DNA(n) + a 2'-deoxyribonucleoside 5'-triphosphate = DNA(n+1) + diphosphate. DNA polymerase involved in damage-induced mutagenesis and translesion synthesis (TLS). It is not the major replicative DNA polymerase. The sequence is that of Error-prone DNA polymerase from Vibrio campbellii (strain ATCC BAA-1116).